The chain runs to 34 residues: Photosystem II reaction center protein M (34 aa).

A helical transmembrane segment spans residues 5-25 (ILAFIATALFVLIPTAFLIIL).

The protein belongs to the PsbM family. As to quaternary structure, PSII is composed of 1 copy each of membrane proteins PsbA, PsbB, PsbC, PsbD, PsbE, PsbF, PsbH, PsbI, PsbJ, PsbK, PsbL, PsbM, PsbT, PsbX, PsbY, PsbZ, Psb30/Ycf12, at least 3 peripheral proteins of the oxygen-evolving complex and a large number of cofactors. It forms dimeric complexes.

Its subcellular location is the plastid. The protein resides in the chloroplast thylakoid membrane. In terms of biological role, one of the components of the core complex of photosystem II (PSII). PSII is a light-driven water:plastoquinone oxidoreductase that uses light energy to abstract electrons from H(2)O, generating O(2) and a proton gradient subsequently used for ATP formation. It consists of a core antenna complex that captures photons, and an electron transfer chain that converts photonic excitation into a charge separation. This subunit is found at the monomer-monomer interface. The chain is Photosystem II reaction center protein M from Zygnema circumcarinatum (Green alga).